The sequence spans 266 residues: Protein crossbronx-like (266 aa).

The 164-residue stretch at 15–178 (KQGYHILAEY…VQEQAILSRN (164 aa)) folds into the UBC core domain. The interval 226 to 266 (SEYLGHIDSSRQMDEEETNQLEKLHRGRIPEPQREEAEVSL) is disordered. Residues 245–266 (QLEKLHRGRIPEPQREEAEVSL) show a composition bias toward basic and acidic residues.

The protein belongs to the ubiquitin-conjugating enzyme family. FTS subfamily.

The chain is Protein crossbronx-like from Drosophila sechellia (Fruit fly).